Consider the following 203-residue polypeptide: GTP cyclohydrolase 1 (203 aa).

Zn(2+) is bound by residues C87, H90, and C158.

Belongs to the GTP cyclohydrolase I family. Toroid-shaped homodecamer, composed of two pentamers of five dimers.

The catalysed reaction is GTP + H2O = 7,8-dihydroneopterin 3'-triphosphate + formate + H(+). It functions in the pathway cofactor biosynthesis; 7,8-dihydroneopterin triphosphate biosynthesis; 7,8-dihydroneopterin triphosphate from GTP: step 1/1. The polypeptide is GTP cyclohydrolase 1 (Xylella fastidiosa (strain 9a5c)).